We begin with the raw amino-acid sequence, 71 residues long: Large ribosomal subunit protein bL31 (71 aa).

Zn(2+)-binding residues include Cys-16, Cys-18, Cys-38, and Cys-41.

This sequence belongs to the bacterial ribosomal protein bL31 family. Type A subfamily. In terms of assembly, part of the 50S ribosomal subunit. The cofactor is Zn(2+).

Its function is as follows. Binds the 23S rRNA. The chain is Large ribosomal subunit protein bL31 from Francisella tularensis subsp. novicida (strain U112).